Here is a 1766-residue protein sequence, read N- to C-terminus: MALNTLINNNSWDILPKWIEYNDEHYKFLSRELINVVFPILRETDKQLLLDSIILVINMIHFKFGFGSIDKPDELLWHQLIQNNLLDSRAILNAMLPYINDNAKDDKKHRLRNLEDLYLEKDDRGQYVYTNSQYNRCIRRLETDGKISVFNRPCIREYFLDHLEILLMSIETSANKLYVNWVDVLPVKMSDFDTLDIYKQTVVKLNSYKSSSNQNSNQSNQESNESNQEPNESNQEINQESNRNTFNRIDLINNYIDPNSGLSYQDIYNTISNHLFHEIKNYKWLIYDIVIAEKPVSYLKYLENKFDFDELLEGRMWSQLDKSQTIRFQNQWNSFLNSSDTNDNTVLHHFYFFFSKYHKNSQKLIRQNKLVLNKDPDDEEDIEENVRITPETTQDARRGMSQVPIEEIYLFFSDQLTSFKKTWYFYTIQINKKEYVDSEDNIIITPKNIYNYCKSLVSYTNASGKFTQIPKYWYSLKPEFIEMILIRILDINDPIKNDWTKNNWFNINNYIRKFYPDTKEEDLPVMNYKLHSLIRNNIVDIIFESLIFHGILSNFKPNLTITDNSYIRASIGSTDDNKRTKFKHQQMAKQYFTGKTRTEYETNAYYYLTGQTYDQLKPLRNKTYHNFEKKYFDFLTSEQIWTFTYAMNWVSQLNFYHHYSNNRVLYITGATGVGKSTQVPKLLMYSQKMLDYNSNGKIICTQPRVPPTVENADTISRELGVPIRAYNKLYDKSVFTSNFYVQYKHQKEEHIDRQADYFLRIVTDGTLLEEMIGSPFLTRSIEDPYAVDNLGNQLDWVKTYSTGNVYDIVIVDEAHEHNANMDMILTLARDSIYVNNSTKLVIVSATMDDDEPIYRRYYRRINDNRTYPLSAFIDYNQLDRANMDRRIHISPPGATTQYVIRDFYLTDEESALINEKNFIDYGIKKTIELANSTTNGDILLFMTGQADIHKSIKAINAATPPNIVALGYYSELSEETKELIVKIHQTLASYTRYKEDVELDESEITRRVPKGTYTRAIIIATNVAEASITLKNLKYVVDTGYNKVVVYDPIDGVYDTWTLPISFSSAMQRRGRVGRLSSGDFYALYSLNKVINNKTAYKIADINIKDTMVKLIKSYPNDPFIISPMNDINQISNLVSIVNKRLTNNYVPEDLIYDILNNPRPYYDIINKQYLYIPDLTDISQYYTYYGKSSDIVLDEFDPNKINLSDYLRTNHDDYHFQQNHGAFYSRCYTGYDNYILEDQSLTFYIIHPDENIINRNLYTGQMDSLKIASSIKESYYYYLLKVNNIQEKSDLQRINFRNFQLIKYPLAMSEAELQMLIMNVPAKKSDLVIRYTNIVDSNINSYTEEYYSGLPNVNINDMTRVKSLLLINLGQIQSAVSLNILNNYNNILWYSYAIPYQLNHDVLAIMVMIDLASDINQWIDPSKSRCCLNKFLNQHFNKEGDIKFLWDLWKKIQPILIKNNLLNTNDINYLRSDFNRNKEKYLSEKKIPFNEFLLFDKLFNSGKLNTTDEFYYYVNGINFDFVMENNNVSRMIEILSENELLNKDKIIDFVSQYLSLNFTIYKQMWSHQYEIENKLNENSDNNKDIVEWVDKNLRFPNIITHPYNMPDDWDKILETYIRALSTNVVKNQGSYYLKMNNGVKIFPSRWSRFNPTEKTFLNNKSEFIIYHSNDSTDNKVNIMYLTPVQLKWILDANPIYYYYLIFDKNNIINKLKETDNIKEILQTISSVKPYYSIKSLIEYVDRMNNPTISRLIRSEIYGLDNSTKN.

The disordered stretch occupies residues 209 to 239; it reads KSSSNQNSNQSNQESNESNQEPNESNQEINQ. The span at 210 to 239 shows a compositional bias: low complexity; it reads SSSNQNSNQSNQESNESNQEPNESNQEINQ. The 210-residue stretch at 656-865 folds into the Helicase ATP-binding domain; that stretch reads YHHYSNNRVL…RYYRRINDNR (210 aa). 669–676 lines the ATP pocket; it reads GATGVGKS. The short motif at 812–815 is the DEAH box element; the sequence is DEAH. Positions 947 to 1116 constitute a Helicase C-terminal domain; the sequence is DIHKSIKAIN…TMVKLIKSYP (170 aa).

It belongs to the DEAD box helicase family. DEAH subfamily.

It carries out the reaction ATP + H2O = ADP + phosphate + H(+). In Acanthamoeba polyphaga mimivirus (APMV), this protein is Putative ATP-dependent RNA helicase R366.